The following is a 247-amino-acid chain: Trypsin-4 (247 aa).

Positions methionine 1–alanine 15 are cleaved as a signal peptide. Residues leucine 16 to lysine 23 constitute a propeptide, activation peptide. The Peptidase S1 domain occupies isoleucine 24 to alanine 245. Disulfide bonds link cysteine 30/cysteine 161, cysteine 49/cysteine 65, cysteine 133/cysteine 234, cysteine 140/cysteine 207, cysteine 172/cysteine 186, and cysteine 197/cysteine 221. Histidine 64 (charge relay system) is an active-site residue. Ca(2+) contacts are provided by glutamate 76, asparagine 78, valine 81, and glutamate 86. Aspartate 108 functions as the Charge relay system in the catalytic mechanism. The Charge relay system role is filled by serine 201.

This sequence belongs to the peptidase S1 family. Ca(2+) is required as a cofactor. Post-translationally, proteolytically cleaved and activated by an autocatalytic mechanism. Cleavage by CTRC inhibits autoactivation.

The protein localises to the secreted. Its subcellular location is the extracellular space. It carries out the reaction Preferential cleavage: Arg-|-Xaa, Lys-|-Xaa.. With respect to regulation, activated by autocatalytic cleavage. Cleavage by CTRC inhibits autoactivation. Functionally, serine protease capable of autoactivation. This Rattus norvegicus (Rat) protein is Trypsin-4.